Consider the following 316-residue polypeptide: Ribosomal protein L11 methyltransferase (316 aa).

Thr-162, Gly-183, Asp-205, and Asn-248 together coordinate S-adenosyl-L-methionine.

This sequence belongs to the methyltransferase superfamily. PrmA family.

The protein localises to the cytoplasm. It carries out the reaction L-lysyl-[protein] + 3 S-adenosyl-L-methionine = N(6),N(6),N(6)-trimethyl-L-lysyl-[protein] + 3 S-adenosyl-L-homocysteine + 3 H(+). In terms of biological role, methylates ribosomal protein L11. This chain is Ribosomal protein L11 methyltransferase, found in Levilactobacillus brevis (strain ATCC 367 / BCRC 12310 / CIP 105137 / JCM 1170 / LMG 11437 / NCIMB 947 / NCTC 947) (Lactobacillus brevis).